A 169-amino-acid chain; its full sequence is uncharacterized protein (169 aa).

This is an uncharacterized protein from Escherichia coli (strain K12).